Reading from the N-terminus, the 384-residue chain is AAFAYFSGFMLDDARFSPAEIELMESVLLDNNLTMVQFVDRLRWDCHELLHRCRYHGDIMDCTQLFQLSKTFFGHCCSFNLRQHGLDFTAQAAAGGLDNGLSLILRYKDENYDALQSYSHGFKLLIQETDAFPSAHADCKFLGLNTESFATLRVVETFCSEAVKSLPISQRNCVFRHEFRLRYFSDYVYPNCELNCRAKNMVKLCGCHTYFFEFNRTKDRVCTFRDIPCLVDNFPDIITRRKKTQCNCPLTCEHFDYDVQMSNFALMLNMPVVDPFYTGIERNDAIVHIFLNSQVYRRVRVDLLSNMVTLVSHLGSAFSLFVGMSMLSLVEIIYYFTVILRRNYVQECRARQKLQTLHRRPNFGWPGDKNSNQQKSVFYIRGRN.

The Extracellular portion of the chain corresponds to 1-319; the sequence is AAFAYFSGFM…LVSHLGSAFS (319 aa). 2 N-linked (GlcNAc...) asparagine glycosylation sites follow: asparagine 32 and asparagine 215. The chain crosses the membrane as a helical span at residues 320–340; it reads LFVGMSMLSLVEIIYYFTVIL. Residues 341 to 384 lie on the Cytoplasmic side of the membrane; sequence RRNYVQECRARQKLQTLHRRPNFGWPGDKNSNQQKSVFYIRGRN.

It belongs to the amiloride-sensitive sodium channel (TC 1.A.6) family.

The protein localises to the membrane. In terms of biological role, part of a complex that plays a role in tracheal liquid clearance. Probable role in sodium transport. The polypeptide is Sodium channel protein Nach (Nach) (Drosophila virilis (Fruit fly)).